The sequence spans 512 residues: Maturase K (512 aa).

The protein belongs to the intron maturase 2 family. MatK subfamily.

Its subcellular location is the plastid. It is found in the chloroplast. Its function is as follows. Usually encoded in the trnK tRNA gene intron. Probably assists in splicing its own and other chloroplast group II introns. This is Maturase K from Lilium regale (Regal lily).